We begin with the raw amino-acid sequence, 331 residues long: Lipoyl synthase (331 aa).

Positions 1–20 (MTTETNPAVTPAYNPSEKQK) are disordered. Positions 71, 76, 82, 97, 101, 104, and 311 each coordinate [4Fe-4S] cluster. The 219-residue stretch at 82–300 (CFGKGTATFM…EEEAYKMGFA (219 aa)) folds into the Radical SAM core domain.

This sequence belongs to the radical SAM superfamily. Lipoyl synthase family. It depends on [4Fe-4S] cluster as a cofactor.

It localises to the cytoplasm. The catalysed reaction is [[Fe-S] cluster scaffold protein carrying a second [4Fe-4S](2+) cluster] + N(6)-octanoyl-L-lysyl-[protein] + 2 oxidized [2Fe-2S]-[ferredoxin] + 2 S-adenosyl-L-methionine + 4 H(+) = [[Fe-S] cluster scaffold protein] + N(6)-[(R)-dihydrolipoyl]-L-lysyl-[protein] + 4 Fe(3+) + 2 hydrogen sulfide + 2 5'-deoxyadenosine + 2 L-methionine + 2 reduced [2Fe-2S]-[ferredoxin]. It functions in the pathway protein modification; protein lipoylation via endogenous pathway; protein N(6)-(lipoyl)lysine from octanoyl-[acyl-carrier-protein]: step 2/2. In terms of biological role, catalyzes the radical-mediated insertion of two sulfur atoms into the C-6 and C-8 positions of the octanoyl moiety bound to the lipoyl domains of lipoate-dependent enzymes, thereby converting the octanoylated domains into lipoylated derivatives. In Janthinobacterium sp. (strain Marseille) (Minibacterium massiliensis), this protein is Lipoyl synthase.